The following is a 452-amino-acid chain: DNA primase DnaG (452 aa).

The Toprim domain occupies 172–248; sequence DTVIIVEGRA…DIDYIARAPP (77 aa). Mg(2+) is bound by residues Glu-178, Asp-222, and Asp-224. The disordered stretch occupies residues 289–320; it reads KKQIEQAQVQPSAAPTSPQPQPESTQPTQPIQ. Over residues 294–320 the composition is skewed to low complexity; the sequence is QAQVQPSAAPTSPQPQPESTQPTQPIQ.

This sequence belongs to the archaeal DnaG primase family. In terms of assembly, forms a ternary complex with MCM helicase and DNA. Component of the archaeal exosome complex. The cofactor is Mg(2+).

It catalyses the reaction ssDNA + n NTP = ssDNA/pppN(pN)n-1 hybrid + (n-1) diphosphate.. RNA polymerase that catalyzes the synthesis of short RNA molecules used as primers for DNA polymerase during DNA replication. Also part of the exosome, which is a complex involved in RNA degradation. Acts as a poly(A)-binding protein that enhances the interaction between heteromeric, adenine-rich transcripts and the exosome. This is DNA primase DnaG from Caldivirga maquilingensis (strain ATCC 700844 / DSM 13496 / JCM 10307 / IC-167).